The following is a 193-amino-acid chain: Biphenyl dioxygenase subunit beta (193 aa).

This sequence belongs to the bacterial ring-hydroxylating dioxygenase beta subunit family. Heterohexamer consisting of 3 BphA1 subunits and 3 BphA2 subunits. A ferredoxin (BphA3) and a ferredoxin reductase (BphA4) must be present to obtain activity.

It carries out the reaction biphenyl + NADH + O2 + H(+) = (2R,3S)-3-phenylcyclohexa-3,5-diene-1,2-diol + NAD(+). Its pathway is xenobiotic degradation; biphenyl degradation; 2-hydroxy-2,4-pentadienoate and benzoate from biphenyl: step 1/4. Functionally, the beta subunit may be responsible for the substrate specificity of the enzyme. The protein is Biphenyl dioxygenase subunit beta (bphA2) of Pseudomonas sp. (strain KKS102).